Reading from the N-terminus, the 463-residue chain is Glycine--tRNA ligase (463 aa).

Arg98 and Glu170 together coordinate substrate. ATP contacts are provided by residues 202–204 (RNE), 212–217 (FRTREF), 287–288 (EL), and 331–334 (GIER). 217–221 (FEQFE) is a binding site for substrate. 327–331 (EPSLG) serves as a coordination point for substrate.

Belongs to the class-II aminoacyl-tRNA synthetase family. As to quaternary structure, homodimer.

It is found in the cytoplasm. It catalyses the reaction tRNA(Gly) + glycine + ATP = glycyl-tRNA(Gly) + AMP + diphosphate. Its function is as follows. Catalyzes the attachment of glycine to tRNA(Gly). This chain is Glycine--tRNA ligase, found in Mycoplasmoides gallisepticum (strain R(low / passage 15 / clone 2)) (Mycoplasma gallisepticum).